Reading from the N-terminus, the 293-residue chain is Outer membrane protein assembly factor BamD (293 aa).

The first 26 residues, 1–26 (MIQRPTFFSPIHLLAVLLATFILITG), serve as a signal peptide directing secretion. Cys27 carries the N-palmitoyl cysteine lipid modification. Residue Cys27 is the site of S-diacylglycerol cysteine attachment.

This sequence belongs to the BamD family. Part of the Bam complex.

Its subcellular location is the cell outer membrane. Part of the outer membrane protein assembly complex, which is involved in assembly and insertion of beta-barrel proteins into the outer membrane. This is Outer membrane protein assembly factor BamD from Xylella fastidiosa (strain Temecula1 / ATCC 700964).